A 199-amino-acid chain; its full sequence is 3-isopropylmalate dehydratase small subunit (199 aa).

It belongs to the LeuD family. LeuD type 1 subfamily. In terms of assembly, heterodimer of LeuC and LeuD.

The enzyme catalyses (2R,3S)-3-isopropylmalate = (2S)-2-isopropylmalate. It functions in the pathway amino-acid biosynthesis; L-leucine biosynthesis; L-leucine from 3-methyl-2-oxobutanoate: step 2/4. Catalyzes the isomerization between 2-isopropylmalate and 3-isopropylmalate, via the formation of 2-isopropylmaleate. The chain is 3-isopropylmalate dehydratase small subunit from Aeromonas hydrophila subsp. hydrophila (strain ATCC 7966 / DSM 30187 / BCRC 13018 / CCUG 14551 / JCM 1027 / KCTC 2358 / NCIMB 9240 / NCTC 8049).